Consider the following 139-residue polypeptide: Large ribosomal subunit protein uL16 (139 aa).

A disordered region spans residues 1–21; that stretch reads MLMPKRVQYRKTQRGRMKGNA. Residues 7 to 17 are compositionally biased toward basic residues; sequence VQYRKTQRGRM.

It belongs to the universal ribosomal protein uL16 family. As to quaternary structure, part of the 50S ribosomal subunit.

Its function is as follows. Binds 23S rRNA and is also seen to make contacts with the A and possibly P site tRNAs. This is Large ribosomal subunit protein uL16 from Chlorobaculum tepidum (strain ATCC 49652 / DSM 12025 / NBRC 103806 / TLS) (Chlorobium tepidum).